The following is a 253-amino-acid chain: RBPJ-interacting and tubulin-associated protein 1 (253 aa).

Disordered stretches follow at residues 30 to 89, 127 to 175, and 188 to 253; these read SPAR…KNKY, TPPA…LCVP, and HLTV…PPWK. Residues 71 to 81 are compositionally biased toward polar residues; sequence SPSSRGSTPNL. Positions 81 to 97 match the Nuclear localization signal motif; the sequence is LTPRKKNKYRLIGHAPS. The interaction with RBPJ/RBPSUH stretch occupies residues 112 to 140; sequence RMAVGDAAKLRTLFWTPPATPRGSHTPCP. The tract at residues 140-253 is interaction with tubulin; the sequence is PRETPLRAIH…CPPKPKPPWK (114 aa). The span at 188–228 shows a compositional bias: polar residues; that stretch reads HLTVPSTGHPASSAPQTNGPWSPRPNTSGATVQSPLVTSKA.

It belongs to the RITA family. Interacts with RBPJ/RBPSUH.

It is found in the cytoplasm. The protein localises to the nucleus. Its subcellular location is the cytoskeleton. It localises to the microtubule organizing center. The protein resides in the centrosome. In terms of biological role, tubulin-binding protein that acts as a negative regulator of Notch signaling pathway. Shuttles between the cytoplasm and the nucleus and mediates the nuclear export of RBPJ/RBPSUH, thereby preventing the interaction between RBPJ/RBPSUH and NICD product of Notch proteins (Notch intracellular domain), leading to down-regulate Notch-mediated transcription. May play a role in neurogenesis. This is RBPJ-interacting and tubulin-associated protein 1 (Rita1) from Mus musculus (Mouse).